A 127-amino-acid polypeptide reads, in one-letter code: Fluoride-specific ion channel FluC (127 aa).

Transmembrane regions (helical) follow at residues 4-24 (LLLA…MLSM), 35-55 (IGTL…FAWF), 71-91 (TGFC…VFLL), and 103-123 (VLIN…LFSA). Na(+) contacts are provided by Gly75 and Thr78.

It belongs to the fluoride channel Fluc/FEX (TC 1.A.43) family.

It is found in the cell inner membrane. It catalyses the reaction fluoride(in) = fluoride(out). Its activity is regulated as follows. Na(+) is not transported, but it plays an essential structural role and its presence is essential for fluoride channel function. Functionally, fluoride-specific ion channel. Important for reducing fluoride concentration in the cell, thus reducing its toxicity. This chain is Fluoride-specific ion channel FluC, found in Salmonella agona (strain SL483).